Consider the following 71-residue polypeptide: Large ribosomal subunit protein bL31 (71 aa).

Residues cysteine 16, cysteine 18, cysteine 37, and cysteine 40 each coordinate Zn(2+).

It belongs to the bacterial ribosomal protein bL31 family. Type A subfamily. In terms of assembly, part of the 50S ribosomal subunit. Zn(2+) serves as cofactor.

Functionally, binds the 23S rRNA. This chain is Large ribosomal subunit protein bL31, found in Pseudoalteromonas atlantica (strain T6c / ATCC BAA-1087).